We begin with the raw amino-acid sequence, 139 residues long: Large ribosomal subunit protein uL22 (139 aa).

The tract at residues Met-1–Asp-22 is disordered. Residues Arg-9 to Arg-18 show a composition bias toward basic residues.

The protein belongs to the universal ribosomal protein uL22 family. In terms of assembly, part of the 50S ribosomal subunit.

In terms of biological role, this protein binds specifically to 23S rRNA; its binding is stimulated by other ribosomal proteins, e.g. L4, L17, and L20. It is important during the early stages of 50S assembly. It makes multiple contacts with different domains of the 23S rRNA in the assembled 50S subunit and ribosome. The globular domain of the protein is located near the polypeptide exit tunnel on the outside of the subunit, while an extended beta-hairpin is found that lines the wall of the exit tunnel in the center of the 70S ribosome. The chain is Large ribosomal subunit protein uL22 from Pseudothermotoga lettingae (strain ATCC BAA-301 / DSM 14385 / NBRC 107922 / TMO) (Thermotoga lettingae).